Consider the following 211-residue polypeptide: MALGLVGRKVGMTRIFTEDGVSIPVTVIEATPNRIAQIKSEATDGYNALQVTAGTKKASRVNKASAGHFAKAGVEAGRGLWEFRLNGGEGDFEVGAELTVELFNEINKVDVTGTSKGKGFQGGVKRWNFSMQDATHGNSLSHRAPGSIGQNQSPGKVFKGKKMAGHMGAERVTTQNLELVRVDAERNLLLVKGAVPGAIGGDVIVKPAVKA.

The tract at residues 135 to 155 (THGNSLSHRAPGSIGQNQSPG) is disordered. Gln-152 is subject to N5-methylglutamine.

Belongs to the universal ribosomal protein uL3 family. In terms of assembly, part of the 50S ribosomal subunit. Forms a cluster with proteins L14 and L19. Methylated by PrmB.

One of the primary rRNA binding proteins, it binds directly near the 3'-end of the 23S rRNA, where it nucleates assembly of the 50S subunit. The chain is Large ribosomal subunit protein uL3 from Pseudoalteromonas translucida (strain TAC 125).